Reading from the N-terminus, the 445-residue chain is Anthranilate N-benzoyltransferase protein 1 (445 aa).

Catalysis depends on proton acceptor residues histidine 164 and aspartate 392.

The protein belongs to the plant acyltransferase family. N-terminus is blocked.

It catalyses the reaction anthranilate + benzoyl-CoA = N-benzoylanthranilate + CoA. Its pathway is phytoalexin biosynthesis; methoxydianthramide B biosynthesis. Its function is as follows. Catalyzes the formation of N-benzoylanthranilate, in the course of methoxydianthramide B, a phytoalexin. Phytoalexins are produced in response to infection by parasites, and are essential for the expression of disease resistance. The polypeptide is Anthranilate N-benzoyltransferase protein 1 (HCBT1) (Dianthus caryophyllus (Carnation)).